The following is a 320-amino-acid chain: Carbonic anhydrase 6 (320 aa).

An N-terminal signal peptide occupies residues 1–17 (MRALALLLALPLLGARA). Positions 21-278 (SLWTYSEGAL…LNGRVVESNF (258 aa)) constitute an Alpha-carbonic anhydrase domain. Residues Cys-42 and Cys-224 are joined by a disulfide bond. The active-site Proton donor/acceptor is His-85. His-111, His-113, and His-138 together coordinate Zn(2+). Position 220–221 (220–221 (TT)) interacts with substrate. N-linked (GlcNAc...) asparagine glycosylation is present at Asn-256.

This sequence belongs to the alpha-carbonic anhydrase family. Zn(2+) serves as cofactor.

It is found in the secreted. The enzyme catalyses hydrogencarbonate + H(+) = CO2 + H2O. In terms of biological role, reversible hydration of carbon dioxide. Its role in saliva is unknown. This Canis lupus familiaris (Dog) protein is Carbonic anhydrase 6 (CA6).